Consider the following 302-residue polypeptide: tRNA dimethylallyltransferase (302 aa).

An ATP-binding site is contributed by 9–16 (GPTGSGKT). 11–16 (TGSGKT) lines the substrate pocket.

This sequence belongs to the IPP transferase family. In terms of assembly, monomer. It depends on Mg(2+) as a cofactor.

It catalyses the reaction adenosine(37) in tRNA + dimethylallyl diphosphate = N(6)-dimethylallyladenosine(37) in tRNA + diphosphate. Catalyzes the transfer of a dimethylallyl group onto the adenine at position 37 in tRNAs that read codons beginning with uridine, leading to the formation of N6-(dimethylallyl)adenosine (i(6)A). In Thermus thermophilus (strain ATCC BAA-163 / DSM 7039 / HB27), this protein is tRNA dimethylallyltransferase.